The following is a 105-amino-acid chain: Heat shock protein HspQ (105 aa).

The interval 76–105 is disordered; that stretch reads EMRDEHPEQPSMDELARTIRKQLQAPRLRN.

This sequence belongs to the HspQ family.

It is found in the cytoplasm. Functionally, involved in the degradation of certain denaturated proteins, including DnaA, during heat shock stress. This chain is Heat shock protein HspQ, found in Salmonella agona (strain SL483).